Here is a 511-residue protein sequence, read N- to C-terminus: Mannosyl-oligosaccharide alpha-1,2-mannosidase (511 aa).

The first 35 residues, 1–35, serve as a signal peptide directing secretion; it reads MRLPVSFPLTVLSLLGSTIAHPYGETEAVLRSEPK. N-linked (GlcNAc...) asparagine glycosylation occurs at Asn182. The cysteines at positions 332 and 361 are disulfide-linked. A glycan (N-linked (GlcNAc...) asparagine) is linked at Asn366. Asp375 functions as the Proton donor in the catalytic mechanism. Asn438 carries an N-linked (GlcNAc...) asparagine glycan. Thr501 is a Ca(2+) binding site.

The protein belongs to the glycosyl hydrolase 47 family. Homodimer. Ca(2+) is required as a cofactor.

Its subcellular location is the secreted. The enzyme catalyses N(4)-(alpha-D-Man-(1-&gt;2)-alpha-D-Man-(1-&gt;2)-alpha-D-Man-(1-&gt;3)-[alpha-D-Man-(1-&gt;2)-alpha-D-Man-(1-&gt;3)-[alpha-D-Man-(1-&gt;2)-alpha-D-Man-(1-&gt;6)]-alpha-D-Man-(1-&gt;6)]-beta-D-Man-(1-&gt;4)-beta-D-GlcNAc-(1-&gt;4)-beta-D-GlcNAc)-L-asparaginyl-[protein] (N-glucan mannose isomer 9A1,2,3B1,2,3) + 4 H2O = N(4)-(alpha-D-Man-(1-&gt;3)-[alpha-D-Man-(1-&gt;3)-[alpha-D-Man-(1-&gt;6)]-alpha-D-Man-(1-&gt;6)]-beta-D-Man-(1-&gt;4)-beta-D-GlcNAc-(1-&gt;4)-beta-D-GlcNAc)-L-asparaginyl-[protein] (N-glucan mannose isomer 5A1,2) + 4 beta-D-mannose. The catalysed reaction is N(4)-(alpha-D-Man-(1-&gt;2)-alpha-D-Man-(1-&gt;2)-alpha-D-Man-(1-&gt;3)-[alpha-D-Man-(1-&gt;3)-[alpha-D-Man-(1-&gt;2)-alpha-D-Man-(1-&gt;6)]-alpha-D-Man-(1-&gt;6)]-beta-D-Man-(1-&gt;4)-beta-D-GlcNAc-(1-&gt;4)-beta-D-GlcNAc)-L-asparaginyl-[protein] (N-glucan mannose isomer 8A1,2,3B1,3) + 3 H2O = N(4)-(alpha-D-Man-(1-&gt;3)-[alpha-D-Man-(1-&gt;3)-[alpha-D-Man-(1-&gt;6)]-alpha-D-Man-(1-&gt;6)]-beta-D-Man-(1-&gt;4)-beta-D-GlcNAc-(1-&gt;4)-beta-D-GlcNAc)-L-asparaginyl-[protein] (N-glucan mannose isomer 5A1,2) + 3 beta-D-mannose. Its pathway is protein modification; protein glycosylation. Functionally, involved in the maturation of Asn-linked oligosaccharides. Progressively trim alpha-1,2-linked mannose residues from Man(9)GlcNAc(2) to produce Man(5)GlcNAc(2). This Penicillium citrinum protein is Mannosyl-oligosaccharide alpha-1,2-mannosidase (MSDC).